The primary structure comprises 436 residues: MSTGFFGDIQKIKYEGPDSTNPLAFRHYQPDEIVLGKRMEDHLRFAVAYWHTFTWPGGDPFGGQTFLRPWFEDTMKAAKLKADVAFEFFSLLGAPYYCFHDADVRPEGRNFAENTKNLNEIVDYFAEKQAATGTKLLWGTANLFSNRRYMSGAATNPDPDVFAFAAATVKTCIDATQKLGGENYVLWGGREGYETLLNTDLKRELDQLGRFLNLVVEYKHKIGFKGTILIEPKPQEPTKHQYDYDVATVYGFLKKHGVENEVKVNIEQGHAILAGHSFEHELALANALGIFGSIDMNRNDYQSGWDTDQFPNNVPEMALAYYHVLAGGGFKTGGTNFDAKLRRQSLDPADLLIGHIGGMDCCARGLKAAAKMIEDKALSQPLADRYAGWESAEAQKLFRGEYSLDEITNWVESHDVNPQPKSGKQELLENVVNRYV.

Catalysis depends on residues histidine 100 and aspartate 103. Residues glutamate 231, glutamate 267, histidine 270, aspartate 295, aspartate 306, aspartate 308, and aspartate 338 each contribute to the Mg(2+) site.

It belongs to the xylose isomerase family. In terms of assembly, homotetramer. It depends on Mg(2+) as a cofactor.

The protein resides in the cytoplasm. The enzyme catalyses alpha-D-xylose = alpha-D-xylulofuranose. The sequence is that of Xylose isomerase from Rhizobium etli (strain CIAT 652).